The sequence spans 180 residues: Large ribosomal subunit protein uL5c (180 aa).

This sequence belongs to the universal ribosomal protein uL5 family. In terms of assembly, part of the 50S ribosomal subunit; contacts the 5S rRNA.

Its subcellular location is the plastid. The protein resides in the chloroplast. Its function is as follows. Binds 5S rRNA, forms part of the central protuberance of the 50S subunit. This Stigeoclonium helveticum (Green alga) protein is Large ribosomal subunit protein uL5c (rpl5).